The following is a 469-amino-acid chain: Glutamate--tRNA ligase 2 (469 aa).

A 'HIGH' region motif is present at residues 10–20 (PSPTGYLHIGG). The Zn(2+) site is built by C99, C101, C126, and D128. The 'KMSKS' region signature appears at 237 to 241 (RLSKR). Residue K240 participates in ATP binding.

The protein belongs to the class-I aminoacyl-tRNA synthetase family. Glutamate--tRNA ligase type 1 subfamily. Monomer. Zn(2+) is required as a cofactor.

The protein resides in the cytoplasm. The catalysed reaction is tRNA(Glu) + L-glutamate + ATP = L-glutamyl-tRNA(Glu) + AMP + diphosphate. Its function is as follows. Catalyzes the attachment of glutamate to tRNA(Glu) in a two-step reaction: glutamate is first activated by ATP to form Glu-AMP and then transferred to the acceptor end of tRNA(Glu). The polypeptide is Glutamate--tRNA ligase 2 (Coxiella burnetii (strain CbuG_Q212) (Coxiella burnetii (strain Q212))).